The chain runs to 121 residues: Large ribosomal subunit protein bL20 (121 aa).

It belongs to the bacterial ribosomal protein bL20 family.

Functionally, binds directly to 23S ribosomal RNA and is necessary for the in vitro assembly process of the 50S ribosomal subunit. It is not involved in the protein synthesizing functions of that subunit. The sequence is that of Large ribosomal subunit protein bL20 from Ruegeria sp. (strain TM1040) (Silicibacter sp.).